The chain runs to 62 residues: Small ribosomal subunit protein eS27 (62 aa).

Positions 17, 20, 36, and 39 each coordinate Zn(2+). Residues 17–39 (CNDCENEQIIFGSASRKITCVVC) form a C4-type zinc finger.

It belongs to the eukaryotic ribosomal protein eS27 family. In terms of assembly, part of the 30S ribosomal subunit. The cofactor is Zn(2+).

This Methanosarcina barkeri (strain Fusaro / DSM 804) protein is Small ribosomal subunit protein eS27.